Consider the following 323-residue polypeptide: Ankyrin repeat and SOCS box protein 11 (323 aa).

7 ANK repeats span residues 64–93 (ADRS…NVNL), 97–126 (NRVS…HVNA), 130–159 (HGAT…KAQL), 162–191 (YLAS…NIEQ), 195–224 (QLGT…SVDH), 227–256 (WLDT…NLNL), and 260–289 (QGKS…ALSQ). Residues 273–323 (SVRQALLLHEGPPALSQLCRLCVRKCLGRTCHHAIYALGLPESLEKFLLYQ) form the SOCS box domain.

It belongs to the ankyrin SOCS box (ASB) family. As to quaternary structure, substrate-recognition component of the ECS(ASB11) complex, composed of ASB11, CUL5, ELOB, ELOC and RNF7/RBX2.

The protein localises to the endoplasmic reticulum. The protein operates within protein modification; protein ubiquitination. In terms of biological role, substrate-recognition component of a cullin-5-RING E3 ubiquitin-protein ligase complex (ECS complex, also named CRL5 complex), which mediates the ubiquitination and subsequent proteasomal degradation of target proteins, such as BIK, DIRAS2 and RPN1. The ECS(ASB11) complex acts as a regulator of the endoplasmic reticulum unfolded protein response by mediating ubiquitination and degradation of BIK. The polypeptide is Ankyrin repeat and SOCS box protein 11 (Asb11) (Mus musculus (Mouse)).